The sequence spans 419 residues: uncharacterized protein (419 aa).

[4Fe-4S] cluster is bound by residues Cys-38, Cys-44, Cys-47, and Cys-126. Gln-250, Tyr-280, Glu-301, and Asp-346 together coordinate S-adenosyl-L-methionine. Residue Cys-373 is the Nucleophile of the active site.

It belongs to the class I-like SAM-binding methyltransferase superfamily. RNA M5U methyltransferase family.

This is an uncharacterized protein from Prochlorococcus marinus (strain SARG / CCMP1375 / SS120).